The following is an 877-amino-acid chain: Putative leucine-rich repeat receptor-like serine/threonine-protein kinase At2g19230 (877 aa).

A signal peptide spans Met1–Ala24. The Extracellular segment spans residues Gln25–Tyr517. N-linked (GlcNAc...) asparagine glycans are attached at residues Asn142, Asn233, Asn261, Asn295, Asn405, and Asn420. LRR repeat units follow at residues Pro439–Pro462 and Asp463–Glu484. The helical transmembrane segment at Ile518–Phe538 threads the bilayer. The Cytoplasmic portion of the chain corresponds to Trp539–Arg877. In terms of domain architecture, Protein kinase spans Asn569 to Leu842. Residues Leu575–Val583 and Lys596 contribute to the ATP site. The residue at position 641 (Tyr641) is a Phosphotyrosine. Asp692 acts as the Proton acceptor in catalysis. Ser726 is modified (phosphoserine). Residues Thr727 and Thr732 each carry the phosphothreonine modification.

Belongs to the protein kinase superfamily. Ser/Thr protein kinase family.

The protein localises to the cell membrane. The enzyme catalyses L-seryl-[protein] + ATP = O-phospho-L-seryl-[protein] + ADP + H(+). It carries out the reaction L-threonyl-[protein] + ATP = O-phospho-L-threonyl-[protein] + ADP + H(+). In Arabidopsis thaliana (Mouse-ear cress), this protein is Putative leucine-rich repeat receptor-like serine/threonine-protein kinase At2g19230.